We begin with the raw amino-acid sequence, 79 residues long: CDC42 small effector protein 1-A (79 aa).

2 S-palmitoyl cysteine lipidation sites follow: C10 and C11. The CRIB domain occupies 30-43; the sequence is IGEPMNFVHLTHVG.

It belongs to the CDC42SE/SPEC family.

Its subcellular location is the cytoplasm. It localises to the cytoskeleton. The protein localises to the cell membrane. Functionally, probably involved in the organization of the actin cytoskeleton by acting downstream of CDC42, inducing actin filament assembly. The sequence is that of CDC42 small effector protein 1-A (cdc42se1-a) from Xenopus laevis (African clawed frog).